A 424-amino-acid chain; its full sequence is CinA-like protein (424 aa).

This sequence belongs to the CinA family.

This chain is CinA-like protein, found in Shewanella piezotolerans (strain WP3 / JCM 13877).